The sequence spans 508 residues: Glycerol kinase (508 aa).

Residue T17 participates in ADP binding. ATP-binding residues include T17, T18, and S19. T17 lines the sn-glycerol 3-phosphate pocket. R21 serves as a coordination point for ADP. Residues R87, E88, Y139, and D256 each coordinate sn-glycerol 3-phosphate. Glycerol contacts are provided by R87, E88, Y139, D256, and Q257. Residues T278 and G322 each contribute to the ADP site. ATP contacts are provided by T278, G322, Q326, and A423. The ADP site is built by A423 and N427.

The protein belongs to the FGGY kinase family.

The enzyme catalyses glycerol + ATP = sn-glycerol 3-phosphate + ADP + H(+). It functions in the pathway polyol metabolism; glycerol degradation via glycerol kinase pathway; sn-glycerol 3-phosphate from glycerol: step 1/1. Its activity is regulated as follows. Inhibited by fructose 1,6-bisphosphate (FBP). Key enzyme in the regulation of glycerol uptake and metabolism. Catalyzes the phosphorylation of glycerol to yield sn-glycerol 3-phosphate. This is Glycerol kinase from Corynebacterium efficiens (strain DSM 44549 / YS-314 / AJ 12310 / JCM 11189 / NBRC 100395).